Reading from the N-terminus, the 84-residue chain is Small ribosomal subunit protein bS18 (84 aa).

It belongs to the bacterial ribosomal protein bS18 family. In terms of assembly, part of the 30S ribosomal subunit. Forms a tight heterodimer with protein bS6.

Functionally, binds as a heterodimer with protein bS6 to the central domain of the 16S rRNA, where it helps stabilize the platform of the 30S subunit. This chain is Small ribosomal subunit protein bS18, found in Methylorubrum extorquens (strain CM4 / NCIMB 13688) (Methylobacterium extorquens).